The sequence spans 300 residues: Bis(5'-nucleosyl)-tetraphosphatase, symmetrical (300 aa).

The protein belongs to the Ap4A hydrolase family.

It carries out the reaction P(1),P(4)-bis(5'-adenosyl) tetraphosphate + H2O = 2 ADP + 2 H(+). In terms of biological role, hydrolyzes diadenosine 5',5'''-P1,P4-tetraphosphate to yield ADP. The protein is Bis(5'-nucleosyl)-tetraphosphatase, symmetrical of Pseudomonas syringae pv. tomato (strain ATCC BAA-871 / DC3000).